Reading from the N-terminus, the 355-residue chain is Protein RecA (355 aa).

67–74 (GPESSGKT) contacts ATP.

This sequence belongs to the RecA family.

The protein resides in the cytoplasm. Can catalyze the hydrolysis of ATP in the presence of single-stranded DNA, the ATP-dependent uptake of single-stranded DNA by duplex DNA, and the ATP-dependent hybridization of homologous single-stranded DNAs. It interacts with LexA causing its activation and leading to its autocatalytic cleavage. The chain is Protein RecA from Shewanella halifaxensis (strain HAW-EB4).